Consider the following 916-residue polypeptide: Oxysterol-binding protein 2 (916 aa).

3 disordered regions span residues 1-20, 34-121, and 139-163; these read MGKA…SRGL, TAAP…PFTK, and PESG…TPLG. The segment covering 49–58 has biased composition (pro residues); that stretch reads EPKPQPQPVP. Positions 79–92 are enriched in low complexity; that stretch reads RSEPVSETTSEPEP. A compositionally biased stretch (polar residues) spans 99–113; the sequence is ELLQGSRPGSESSSG. Positions 144–155 are enriched in low complexity; that stretch reads LPALKPLPLLRP. The region spanning 182–274 is the PH domain; that stretch reads LDSFEGWLLK…WITALELAKA (93 aa). Disordered stretches follow at residues 282 to 301 and 417 to 448; these read THSD…DKSE and FHSA…EEDE. Residue serine 287 is modified to Phosphoserine. The residue at position 763 (serine 763) is a Phosphoserine. A disordered region spans residues 813-842; that stretch reads EGVAPTDSRLRPDQRLMEKGRWDEANTEKQ.

Belongs to the OSBP family. Interacts with CCDC159. As to expression, expressed mainly in retina, testis, and fetal liver.

It is found in the membrane. The protein localises to the cytoplasmic vesicle. Its subcellular location is the secretory vesicle. The protein resides in the acrosome. Its function is as follows. Binds 7-ketocholesterol. Acts during spermatid development where its function is required prior to the removal of cytoplasm from the sperm head. The chain is Oxysterol-binding protein 2 (OSBP2) from Homo sapiens (Human).